A 344-amino-acid chain; its full sequence is Rho guanine nucleotide exchange factor 39 (344 aa).

Residues lysine 22–isoleucine 197 enclose the DH domain. The 105-residue stretch at tryptophan 227–arginine 331 folds into the PH domain.

Its subcellular location is the cell membrane. Its function is as follows. Promotes cell proliferation. The protein is Rho guanine nucleotide exchange factor 39 (Arhgef39) of Mus musculus (Mouse).